The sequence spans 160 residues: Cytochrome b6-f complex subunit 4 (160 aa).

3 helical membrane-spanning segments follow: residues 36–56 (LLYL…GLAV), 95–115 (LLGV…PFIE), and 131–151 (LVFI…CLPI).

The protein belongs to the cytochrome b family. PetD subfamily. The 4 large subunits of the cytochrome b6-f complex are cytochrome b6, subunit IV (17 kDa polypeptide, petD), cytochrome f and the Rieske protein, while the 4 small subunits are petG, petL, petM and petN. The complex functions as a dimer.

The protein resides in the plastid. Its subcellular location is the chloroplast thylakoid membrane. Functionally, component of the cytochrome b6-f complex, which mediates electron transfer between photosystem II (PSII) and photosystem I (PSI), cyclic electron flow around PSI, and state transitions. The polypeptide is Cytochrome b6-f complex subunit 4 (Thalassiosira pseudonana (Marine diatom)).